A 464-amino-acid chain; its full sequence is Integrator complex subunit 12 (464 aa).

The segment at 42–98 (GNDSVYRPQPKEVEQPKAMLSKVKPETKASSSTPSSSILSKPLASEKVKKEAEKRTA) is disordered. Positions 69-84 (KASSSTPSSSILSKPL) are enriched in low complexity. Basic and acidic residues predominate over residues 85-98 (ASEKVKKEAEKRTA). Residues 156-212 (GLACVVCRQMTVFSGNQLVECQECHNLYHQDCHRPQVTDKDVNDPRLVWYCARCTRQ) form a PHD-type zinc finger. 2 disordered regions span residues 216 to 252 (MAQK…LKSK) and 312 to 445 (TNSQ…SQLN). Low complexity predominate over residues 227 to 239 (PAPSAVSAVTPVA). The span at 312-329 (TNSQATSGKPPSLSSVQK) shows a compositional bias: polar residues. Low complexity predominate over residues 339 to 371 (SKAGSVSKSGSGGSSSTIPLKPLPPLILGKTGL). Positions 372-382 (SRSMSSDNVSK) are enriched in polar residues. Residues 384 to 421 (GLPSPNPSSSGSVSSLSSQLGSNNGSSNTAGSNVNSSN) show a composition bias toward low complexity. Residues 428-445 (SMQQSGAKGPTSQESQLN) show a composition bias toward polar residues.

The protein belongs to the Integrator subunit 12 family. Component of the Integrator complex, composed of core subunits INTS1, INTS2, INTS3, INTS4, INTS5, INTS6, INTS7, INTS8, INTS9/RC74, INTS10, INTS11/CPSF3L, INTS12, INTS13, INTS14 and INTS15. The core complex associates with protein phosphatase 2A subunits PPP2CA and PPP2R1A, to form the Integrator-PP2A (INTAC) complex.

It localises to the nucleus. Component of the integrator complex, a multiprotein complex that terminates RNA polymerase II (Pol II) transcription in the promoter-proximal region of genes. The integrator complex provides a quality checkpoint during transcription elongation by driving premature transcription termination of transcripts that are unfavorably configured for transcriptional elongation: the complex terminates transcription by (1) catalyzing dephosphorylation of the C-terminal domain (CTD) of Pol II subunit POLR2A/RPB1 and SUPT5H/SPT5, (2) degrading the exiting nascent RNA transcript via endonuclease activity and (3) promoting the release of Pol II from bound DNA. The integrator complex is also involved in terminating the synthesis of non-coding Pol II transcripts, such as enhancer RNAs (eRNAs), small nuclear RNAs (snRNAs), telomerase RNAs and long non-coding RNAs (lncRNAs). The chain is Integrator complex subunit 12 (ints12) from Xenopus laevis (African clawed frog).